Here is a 300-residue protein sequence, read N- to C-terminus: Transcription factor E2F5 (300 aa).

Residues 2 to 73 mediate DNA binding; it reads GSSRHEKSLG…KNSIQWKGVG (72 aa). Residues 31-53 form a leucine-zipper region; it reads LKAAADTLAVRQKRRIYDITNVL. A DEF box motif is present at residues 36–73; it reads DTLAVRQKRRIYDITNVLEGIDLIEKKSKNSIQWKGVG. The interval 74–170 is dimerization; sequence AGCNTKEVID…GQNGQKKYQI (97 aa). The disordered stretch occupies residues 191-250; it reads SKPVVFPVPPPDDLTQPSSQSSTSVTPPKSTMAAQNLPEQHVSERSQNFQQTPATEISSG. A compositionally biased stretch (low complexity) spans 203–221; it reads DLTQPSSQSSTSVTPPKST. The segment covering 235-246 has biased composition (polar residues); sequence RSQNFQQTPATE. Positions 242–300 are transactivation; sequence TPATEISSGSISGDIIDELMSSDVFPLLRLSPTPADDYNFNLDDNEGVCDLFDVQILNY. Residues 277 to 294 are RBL2 association; it reads DDYNFNLDDNEGVCDLFD.

Belongs to the E2F/DP family. As to quaternary structure, component of the DRTF1/E2F transcription factor complex. Binds cooperatively with DP-1 to E2F sites. Interaction with retinoblastoma protein RB1 or proteins RBL1 and RBL2 inhibits the E2F transactivation domain. Component of the DREAM complex (also named LINC complex) at least composed of E2F4, E2F5, LIN9, LIN37, LIN52, LIN54, MYBL1, MYBL2, RBL1, RBL2, RBBP4, TFDP1 and TFDP2. The complex exists in quiescent cells where it represses cell cycle-dependent genes. It dissociates in S phase when LIN9, LIN37, LIN52 and LIN54 form a subcomplex that binds to MYBL2. As to expression, found in placenta followed by kidney, lung and brain.

Its subcellular location is the nucleus. In terms of biological role, transcriptional activator that binds to E2F sites, these sites are present in the promoter of many genes whose products are involved in cell proliferation. May mediate growth factor-initiated signal transduction. It is likely involved in the early responses of resting cells to growth factor stimulation. Specifically required for multiciliate cell differentiation: together with MCIDAS and E2F5, binds and activate genes required for centriole biogenesis. The polypeptide is Transcription factor E2F5 (E2f5) (Rattus norvegicus (Rat)).